The following is a 130-amino-acid chain: Fluoride-specific ion channel FluC (130 aa).

Transmembrane regions (helical) follow at residues 7 to 27 (VLAICIGASLGALARWRLGLW), 36 to 56 (LGTLAANLIGGYLIGICVAVF), 69 to 89 (ALITGFLGGLTTFSSFSAEVV), and 99 to 119 (LGFGTAGLHLFGSLLLTLAGI). The Na(+) site is built by Gly76 and Thr79.

The protein belongs to the fluoride channel Fluc/FEX (TC 1.A.43) family.

Its subcellular location is the cell inner membrane. The enzyme catalyses fluoride(in) = fluoride(out). With respect to regulation, na(+) is not transported, but it plays an essential structural role and its presence is essential for fluoride channel function. In terms of biological role, fluoride-specific ion channel. Important for reducing fluoride concentration in the cell, thus reducing its toxicity. In Albidiferax ferrireducens (strain ATCC BAA-621 / DSM 15236 / T118) (Rhodoferax ferrireducens), this protein is Fluoride-specific ion channel FluC.